Consider the following 458-residue polypeptide: Gamma aminobutyrate transaminase 2 (458 aa).

114-115 (GS) is a binding site for pyridoxal 5'-phosphate. A substrate-binding site is contributed by Y147. Residue D254 participates in pyridoxal 5'-phosphate binding. Position 283 (K283) interacts with substrate. Position 283 is an N6-(pyridoxal phosphate)lysine (K283).

This sequence belongs to the class-III pyridoxal-phosphate-dependent aminotransferase family. In terms of tissue distribution, expressed in leaves, roots, stems, flowers and fruits. Expressed in carpels, but not in stamens.

It localises to the cytoplasm. It carries out the reaction 4-aminobutanoate + pyruvate = succinate semialdehyde + L-alanine. The enzyme catalyses 4-aminobutanoate + glyoxylate = succinate semialdehyde + glycine. Functionally, transaminase that degrades gamma-amino butyric acid (GABA) and uses pyruvate or glyoxylate as amino-group acceptor. Cannot use beta-alanine, ornithine, acetylornithine, serine, glycine, asparagine, glutamine, glutamate, valine, leucine, isoleucine, methionine, phenylalanine, histidine, lysine, arginine, aspartate, threonine, tyrosine, tryptophan, proline, or cysteine as amino donors. May be responsible for establishing the GABA gradient in the carpel. The polypeptide is Gamma aminobutyrate transaminase 2 (GABA-TP2) (Solanum lycopersicum (Tomato)).